Reading from the N-terminus, the 261-residue chain is Phosphoadenosine phosphosulfate reductase (261 aa).

Belongs to the PAPS reductase family. CysH subfamily.

The catalysed reaction is [thioredoxin]-disulfide + sulfite + adenosine 3',5'-bisphosphate + 2 H(+) = [thioredoxin]-dithiol + 3'-phosphoadenylyl sulfate. It participates in sulfur metabolism; hydrogen sulfide biosynthesis; sulfite from sulfate: step 3/3. In terms of biological role, the NADP dependent reduction of PAPS into sulfite involves thioredoxin which probably plays the role of a thiol carrier. The chain is Phosphoadenosine phosphosulfate reductase (MET16) from Saccharomyces cerevisiae (strain ATCC 204508 / S288c) (Baker's yeast).